A 230-amino-acid chain; its full sequence is Cytidylate kinase (230 aa).

Gly12–Thr20 serves as a coordination point for ATP.

Belongs to the cytidylate kinase family. Type 1 subfamily.

Its subcellular location is the cytoplasm. It catalyses the reaction CMP + ATP = CDP + ADP. It carries out the reaction dCMP + ATP = dCDP + ADP. This is Cytidylate kinase from Yersinia enterocolitica serotype O:8 / biotype 1B (strain NCTC 13174 / 8081).